A 407-amino-acid chain; its full sequence is Argininosuccinate synthase (407 aa).

Residues 16–24 and alanine 44 each bind ATP; that span reads AYSGGLDTS. Residues tyrosine 96 and serine 101 each contribute to the L-citrulline site. Residue glycine 126 participates in ATP binding. L-aspartate is bound by residues threonine 128, asparagine 132, and aspartate 133. Position 132 (asparagine 132) interacts with L-citrulline. 5 residues coordinate L-citrulline: arginine 136, serine 185, serine 194, glutamate 270, and tyrosine 282.

It belongs to the argininosuccinate synthase family. Type 1 subfamily. Homotetramer.

It is found in the cytoplasm. It carries out the reaction L-citrulline + L-aspartate + ATP = 2-(N(omega)-L-arginino)succinate + AMP + diphosphate + H(+). It participates in amino-acid biosynthesis; L-arginine biosynthesis; L-arginine from L-ornithine and carbamoyl phosphate: step 2/3. This is Argininosuccinate synthase from Shewanella sediminis (strain HAW-EB3).